The following is a 119-amino-acid chain: Large ribosomal subunit protein bL20 (119 aa).

It belongs to the bacterial ribosomal protein bL20 family.

Functionally, binds directly to 23S ribosomal RNA and is necessary for the in vitro assembly process of the 50S ribosomal subunit. It is not involved in the protein synthesizing functions of that subunit. The protein is Large ribosomal subunit protein bL20 of Delftia acidovorans (strain DSM 14801 / SPH-1).